The sequence spans 231 residues: Small ribosomal subunit protein uS3c (231 aa).

The 85-residue stretch at L39–R123 folds into the KH type-2 domain.

Belongs to the universal ribosomal protein uS3 family. In terms of assembly, part of the 30S ribosomal subunit.

It is found in the plastid. The protein localises to the chloroplast. This is Small ribosomal subunit protein uS3c (rps3) from Chlorella vulgaris (Green alga).